The chain runs to 245 residues: Vacuolar iron transporter (245 aa).

Residues 1–28 (MGEVGESEKYLLNRHKEHHFTAGETVRD) lie on the Cytoplasmic side of the membrane. The helical transmembrane segment at 29–49 (IIIGFSDGLTVPFALAAGLSG) threads the bilayer. Residues 50 to 55 (ANASSS) are Vacuolar-facing. A helical membrane pass occupies residues 56–76 (IILTAGIAEVAAGAISMGLGG). Over 77–162 (YLAAKSEADH…PRRALQSALT (86 aa)) the chain is Cytoplasmic. Fe cation contacts are provided by glutamate 94, glutamate 97, glutamate 105, glutamate 108, methionine 141, and glutamate 145. The chain crosses the membrane as a helical span at residues 163–183 (IAISYVLSGLIPLLPYMFIPI). Residues 184-186 (AQK) lie on the Vacuolar side of the membrane. The chain crosses the membrane as a helical span at residues 187–207 (AVVSSVIVTIFALLIFGFAKG). Topologically, residues 208-214 (YFTGNKP) are cytoplasmic. Residues 215–235 (VWSALQTALIGAIASAAAFGM) traverse the membrane as a helical segment. Topologically, residues 236–245 (AKGCASSVFE) are vacuolar.

The protein belongs to the CCC1 family. Expressed in petal tissues, but not in other parts of the plant, such as leaves, roots, sepals and stems.

The protein resides in the vacuole membrane. The catalysed reaction is Fe(2+)(in) = Fe(2+)(out). Vacuolar iron transporter involved in the transfer of iron ions from the cytosol to the vacuole for intracellular iron storage. Plays an essential role in the development of blue coloration in cornflower petals. This Centaurea cyanus (Garden cornflower) protein is Vacuolar iron transporter.